A 422-amino-acid polypeptide reads, in one-letter code: MSARAGIVVTGTEVLTGRVQDLNGPWLADRLLELGVELSHITLCGDRPADIEAQLRFLADQGVDLIITSGGLGPTADDMTVEVVSRFCGRELELDPGLETRIGEIVTRLMARFPDVDPAAVIAANRKQAFVPDGAVILDPVGTAPGVVVPGTPTVVVLPGPPRELQPMWQAAVAADAVQTAIADRVSYRQDTVRMFGLPESGLAETLREAEGSVAGFDRLEITTCLRRGELEIVTRYEPRDADAYDGLLNMLRDKHSRELFSEDGALVDDQVAALLAGRTIATAESCTAGLLAARLTDRAGSSAYVAGGVVSYSNDAKTDLLGVDAELIAAHGAVSEPVAEAMAAGALQRFGADTAVAITGIAGPGGGTPAKPVGTVCFSVALADGTFLTRTSQLPGNRSDVRERSTTVAMHLLRRALSGGG.

This sequence belongs to the CinA family.

This chain is CinA-like protein, found in Mycolicibacterium gilvum (strain PYR-GCK) (Mycobacterium gilvum (strain PYR-GCK)).